A 442-amino-acid chain; its full sequence is Aspartate--tRNA(Asp/Asn) ligase (442 aa).

An L-aspartate-binding site is contributed by E172. Positions 194 to 197 (QFYK) are aspartate. Residue R216 participates in L-aspartate binding. Residues 216–218 (RAE), 224–226 (RHL), and E365 contribute to the ATP site. E365 and T368 together coordinate Mg(2+). 2 residues coordinate L-aspartate: T368 and R372. Residue 413–416 (GLER) coordinates ATP.

This sequence belongs to the class-II aminoacyl-tRNA synthetase family. Type 2 subfamily. As to quaternary structure, homodimer. Mg(2+) is required as a cofactor.

The protein resides in the cytoplasm. It carries out the reaction tRNA(Asx) + L-aspartate + ATP = L-aspartyl-tRNA(Asx) + AMP + diphosphate. Functionally, aspartyl-tRNA synthetase with relaxed tRNA specificity since it is able to aspartylate not only its cognate tRNA(Asp) but also tRNA(Asn). Reaction proceeds in two steps: L-aspartate is first activated by ATP to form Asp-AMP and then transferred to the acceptor end of tRNA(Asp/Asn). The polypeptide is Aspartate--tRNA(Asp/Asn) ligase (aspS) (Aeropyrum pernix (strain ATCC 700893 / DSM 11879 / JCM 9820 / NBRC 100138 / K1)).